A 350-amino-acid polypeptide reads, in one-letter code: MAAENERKSPSAVSDMGAWAMNVISSVGIIMANKQLMSSSGFAFSFATTLTGFHFALTALVGMVSNATGFSASKHVPMWELIWFSIVANVSIAAMNFSLMLNSVGFYQISKLSMIPVVCVMEWILHSKRYSREVKISVVVVVVGVGICTVTDVKVNAKGFICACVAIFSSSLQQILIGSLQKKYSIGSFELLSKTAPIQAFSLLVVGPLVDYLLSGKFIMKYNMSSGCFLFILLSCGLAVFCNISQYLCIGRFSAVSFQVIGHMKTVCILTLGWLLFDSAMTFKNVAGMIVAIVGMVIYSWAMELEKQSIIAAKALNSVKHSLTEEEFELLKEGVETTQSKDVELGRTKD.

10 helical membrane-spanning segments follow: residues 12–32, 41–61, 81–101, 104–124, 133–153, 160–180, 200–220, 224–244, 257–277, and 286–306; these read AVSDMGAWAMNVISSVGIIMA, GFAFSFATTLTGFHFALTALV, LIWFSIVANVSIAAMNFSLML, VGFYQISKLSMIPVVCVMEWI, EVKISVVVVVVGVGICTVTDV, FICACVAIFSSSLQQILIGSL, AFSLLVVGPLVDYLLSGKFIM, MSSGCFLFILLSCGLAVFCNI, SFQVIGHMKTVCILTLGWLLF, and VAGMIVAIVGMVIYSWAMELE.

It belongs to the TPT transporter family. TPT (TC 2.A.7.9) subfamily.

It is found in the golgi apparatus membrane. Nucleotide-sugar transporter that transports UDP-rhamnose or UDP-galactose and UMP in a strict counter-exchange mode. The protein is UDP-rhamnose/UDP-galactose transporter 3 of Arabidopsis thaliana (Mouse-ear cress).